We begin with the raw amino-acid sequence, 187 residues long: MLSHTEMKQGKRVLIDDQPWIIVKADFVKPGKGQAFTKIKVKNLMDGRVIERTFKSSDSVAKADVVDVEMQYLYNDGELYHFMNPATFEQVALSEKQVEECKKWLKENEVYEVTLWENRAINVVPPSFMILEITECEPGVRGDTVTGATKPAVVESGASIKVPLFVEIGARVKVDTRTGEYMERAKG.

The protein belongs to the elongation factor P family.

The protein resides in the cytoplasm. It participates in protein biosynthesis; polypeptide chain elongation. In terms of biological role, involved in peptide bond synthesis. Stimulates efficient translation and peptide-bond synthesis on native or reconstituted 70S ribosomes in vitro. Probably functions indirectly by altering the affinity of the ribosome for aminoacyl-tRNA, thus increasing their reactivity as acceptors for peptidyl transferase. In Magnetococcus marinus (strain ATCC BAA-1437 / JCM 17883 / MC-1), this protein is Elongation factor P.